A 3625-amino-acid polypeptide reads, in one-letter code: Spectinabilin polyketide synthase system protein NorA' (3625 aa).

A Ketosynthase family 3 (KS3) 1 domain is found at Arg33 to Gln459. Residues Cys206, His341, and His381 each act as for beta-ketoacyl synthase 1 activity in the active site. The Malonyl-CoA:ACP transacylase (MAT) 1 domain occupies Leu564–Arg881. Residues His930–Ala1054 form an N-terminal hotdog fold 1 region. The 271-residue stretch at His930 to Ala1200 folds into the PKS/mFAS DH 1 domain. The active-site Proton acceptor; for dehydratase activity 1 is His962. The interval Ala1066–Ala1200 is C-terminal hotdog fold 1. Asp1125 acts as the Proton donor; for dehydratase activity 1 in catalysis. Residues Gly1443 to Glu1620 enclose the Ketoreductase (KR) 1 domain. Residues Gly1722–Leu1797 form the Carrier 1 domain. Ser1757 carries the O-(pantetheine 4'-phosphoryl)serine modification. The Ketosynthase family 3 (KS3) 2 domain maps to Asp1815–Gln2231. Catalysis depends on for beta-ketoacyl synthase 2 activity residues Cys1978, His2113, and His2153. One can recognise a Malonyl-CoA:ACP transacylase (MAT) 2 domain in the interval Val2336 to Ala2656. The interval His2704–Thr2829 is N-terminal hotdog fold 2. A PKS/mFAS DH 2 domain is found at His2704 to Arg2981. The active-site Proton acceptor; for dehydratase activity 2 is His2736. The C-terminal hotdog fold 2 stretch occupies residues Ala2842–Arg2981. Residue Asp2903 is the Proton donor; for dehydratase activity 2 of the active site. In terms of domain architecture, Ketoreductase (KR) 2 spans Gly3182–Glu3361. The Carrier 2 domain maps to Arg3462–Leu3537. Residue Ser3497 is modified to O-(pantetheine 4'-phosphoryl)serine.

As to quaternary structure, the spectinabilin polyketide synthase complex is composed of 4 proteins, NorA, NorA', NorB and NorC. The complex comprises 6 modules with a total of 28 catalytic domains catalyzing 7 chain elongations. NorA comprises one module, NorA' two modules, NorB one module and NorC two modules. It depends on pantetheine 4'-phosphate as a cofactor.

The enzyme catalyses 4-nitrobenzoyl-CoA + 6 (S)-methylmalonyl-CoA + malonyl-CoA + 6 NADPH + 12 H(+) = demethyldeoxyspectinabilin + 7 CO2 + 6 NADP(+) + 8 CoA + 5 H2O. It functions in the pathway antibiotic biosynthesis. It participates in polyketide biosynthesis. In terms of biological role, component of a type I modular polyketide synthase (PKS) that generates the backbone of the antibiotic spectinabilin (also known as neoaureothin), a nitroaryl-substituted polyketide metabolite. This PKS system accepts the unusual starter unit 4-nitrobenzoyl-CoA and extends it by 6 molecules of (S)-methylmalonyl-CoA and a single molecule of malonyl-CoA. This chain is Spectinabilin polyketide synthase system protein NorA', found in Streptomyces orinoci (Streptoverticillium orinoci).